Here is a 232-residue protein sequence, read N- to C-terminus: ATP-dependent dethiobiotin synthetase BioD (232 aa).

ATP is bound at residue 16 to 21; that stretch reads GVGKTV. T20 provides a ligand contact to Mg(2+). K41 is an active-site residue. Residue T45 participates in substrate binding. Residues D52, 111–114, 171–172, 200–202, and E207 each bind ATP; these read EGIG, NQ, and PLS. Residues D52 and E111 each coordinate Mg(2+).

Belongs to the dethiobiotin synthetase family. As to quaternary structure, homodimer. Mg(2+) serves as cofactor.

The protein localises to the cytoplasm. The enzyme catalyses (7R,8S)-7,8-diammoniononanoate + CO2 + ATP = (4R,5S)-dethiobiotin + ADP + phosphate + 3 H(+). It catalyses the reaction (7R,8S)-8-amino-7-(carboxyamino)nonanoate + ATP = (4R,5S)-dethiobiotin + ADP + phosphate + H(+). It participates in cofactor biosynthesis; biotin biosynthesis; biotin from 7,8-diaminononanoate: step 1/2. Functionally, catalyzes a mechanistically unusual reaction, the ATP-dependent insertion of CO2 between the N7 and N8 nitrogen atoms of 7,8-diaminopelargonic acid (DAPA, also called 7,8-diammoniononanoate) to form a ureido ring. This archaea does not encode bioA (which catalyzes the formation of the precursor for this reaction in the cannonical pathway), instead it encodes bioU, which replaces bioA and also performs the first half of the cannonical BioD reaction. Thus in this archaea BioD has a different substrate. The chain is ATP-dependent dethiobiotin synthetase BioD from Haloferax mediterranei (strain ATCC 33500 / DSM 1411 / JCM 8866 / NBRC 14739 / NCIMB 2177 / R-4) (Halobacterium mediterranei).